A 444-amino-acid polypeptide reads, in one-letter code: Tol-Pal system protein TolB (444 aa).

Positions 1 to 26 (MNLFRSLAPMGLALALLLPAAAPALA) are cleaved as a signal peptide. A compositionally biased stretch (polar residues) spans 287–310 (ASGTRRQLTNSPSIETAPSYSPDG). The disordered stretch occupies residues 287–311 (ASGTRRQLTNSPSIETAPSYSPDGS).

This sequence belongs to the TolB family. The Tol-Pal system is composed of five core proteins: the inner membrane proteins TolA, TolQ and TolR, the periplasmic protein TolB and the outer membrane protein Pal. They form a network linking the inner and outer membranes and the peptidoglycan layer.

Its subcellular location is the periplasm. In terms of biological role, part of the Tol-Pal system, which plays a role in outer membrane invagination during cell division and is important for maintaining outer membrane integrity. The protein is Tol-Pal system protein TolB of Cereibacter sphaeroides (strain ATCC 17025 / ATH 2.4.3) (Rhodobacter sphaeroides).